An 89-amino-acid chain; its full sequence is Small ribosomal subunit protein bS20 (89 aa).

Belongs to the bacterial ribosomal protein bS20 family.

Functionally, binds directly to 16S ribosomal RNA. This is Small ribosomal subunit protein bS20 from Xanthobacter autotrophicus (strain ATCC BAA-1158 / Py2).